The sequence spans 75 residues: Large ribosomal subunit protein bL31 (75 aa).

Residues C16, C18, C37, and C40 each coordinate Zn(2+).

It belongs to the bacterial ribosomal protein bL31 family. Type A subfamily. Part of the 50S ribosomal subunit. Zn(2+) is required as a cofactor.

Functionally, binds the 23S rRNA. The protein is Large ribosomal subunit protein bL31 of Nitrosospira multiformis (strain ATCC 25196 / NCIMB 11849 / C 71).